A 45-amino-acid chain; its full sequence is Keratin-associated protein 22-2 (45 aa).

It belongs to the KRTAP type 20 family. In terms of assembly, interacts with hair keratins.

Its function is as follows. In the hair cortex, hair keratin intermediate filaments are embedded in an interfilamentous matrix, consisting of hair keratin-associated proteins (KRTAP), which are essential for the formation of a rigid and resistant hair shaft through their extensive disulfide bond cross-linking with abundant cysteine residues of hair keratins. The matrix proteins include the high-sulfur and high-glycine-tyrosine keratins. This chain is Keratin-associated protein 22-2 (KRTAP22-2), found in Homo sapiens (Human).